The primary structure comprises 1407 residues: Metabotropic glutamate receptor-like protein P (1407 aa).

At Met1 to Lys696 the chain is on the extracellular side. N-linked (GlcNAc...) asparagine glycosylation is found at Asn43 and Asn58. PbH1 repeat units follow at residues Ile93–Gly118 and Phe129–Asn150. N-linked (GlcNAc...) asparagine glycans are attached at residues Asn162, Asn179, Asn182, Asn230, Asn241, Asn270, Asn368, Asn391, Asn464, Asn512, Asn539, Asn544, Asn554, Asn571, Asn627, and Asn646. Residues Ile254–Thr279 form a PbH1 3 repeat. The stretch at Gly452–Thr476 is one PbH1 4 repeat. The chain crosses the membrane as a helical span at residues Phe697–Ser717. Residues Leu718–Pro731 lie on the Cytoplasmic side of the membrane. A helical membrane pass occupies residues Leu732–Phe752. At Gly753–Thr758 the chain is on the extracellular side. Residues Cys759 to Ile779 traverse the membrane as a helical segment. The Cytoplasmic segment spans residues Lys780–Lys806. A helical transmembrane segment spans residues Phe807–Pro827. The Extracellular segment spans residues Thr828 to Tyr853. A helical transmembrane segment spans residues Val854–Val874. Topologically, residues Cys875–Tyr890 are cytoplasmic. The helical transmembrane segment at Ile891 to Val911 threads the bilayer. Residues Phe912–Asn919 lie on the Extracellular side of the membrane. A helical membrane pass occupies residues Phe920 to Ile940. The Cytoplasmic segment spans residues Pro941–Lys1407. Positions Gln991 to Gly1004 are enriched in polar residues. Disordered stretches follow at residues Gln991–Phe1072, Gly1084–Gly1248, Lys1267–Glu1351, and Phe1369–Lys1407. Residues Arg1005–Asn1029 show a composition bias toward low complexity. A compositionally biased stretch (polar residues) spans Met1030–Ile1040. Residues Ser1041–Asn1071 show a composition bias toward low complexity. A compositionally biased stretch (basic and acidic residues) spans Gly1084–Lys1093. Composition is skewed to low complexity over residues Pro1099–Ile1147, Ser1154–Ser1246, and Ser1276–Asn1339. Residues Asn1315–Asp1344 are a coiled coil.

This sequence belongs to the G-protein coupled receptor 3 family. GABA-B receptor subfamily.

It localises to the membrane. This is Metabotropic glutamate receptor-like protein P (grlP) from Dictyostelium discoideum (Social amoeba).